The primary structure comprises 871 residues: Synaptonemal complex protein 1 (871 aa).

Positions 1-40 (MQKLGFPAMKSLDKPRSLSGSANMYSFSNRKPPDSVSSGS) are disordered. Over residues 18–40 (LSGSANMYSFSNRKPPDSVSSGS) the composition is skewed to polar residues. Coiled-coil stretches lie at residues 58–304 (MRTD…DKKN) and 331–608 (LALD…EESK). Disordered regions lie at residues 708-741 (VMSD…RSEH) and 778-871 (SVLS…YAFD). Residues 719 to 728 (VNSNKNYSIS) show a composition bias toward polar residues. Residues 729-741 (KDSRLGGSKRSEH) are compositionally biased toward basic and acidic residues. Residues 831–847 (LTPQSIAKGTGMTSHAR) are compositionally biased toward polar residues.

It localises to the nucleus. Required for chromosome synapsis and normal fidelity of crossing over. In Arabidopsis thaliana (Mouse-ear cress), this protein is Synaptonemal complex protein 1 (ZYP1A).